The following is a 367-amino-acid chain: UDP-N-acetylglucosamine--N-acetylmuramyl-(pentapeptide) pyrophosphoryl-undecaprenol N-acetylglucosamine transferase (367 aa).

Residues 15 to 17 (TGG), N127, R163, S191, I249, and Q294 contribute to the UDP-N-acetyl-alpha-D-glucosamine site.

It belongs to the glycosyltransferase 28 family. MurG subfamily.

The protein localises to the cell inner membrane. The catalysed reaction is di-trans,octa-cis-undecaprenyl diphospho-N-acetyl-alpha-D-muramoyl-L-alanyl-D-glutamyl-meso-2,6-diaminopimeloyl-D-alanyl-D-alanine + UDP-N-acetyl-alpha-D-glucosamine = di-trans,octa-cis-undecaprenyl diphospho-[N-acetyl-alpha-D-glucosaminyl-(1-&gt;4)]-N-acetyl-alpha-D-muramoyl-L-alanyl-D-glutamyl-meso-2,6-diaminopimeloyl-D-alanyl-D-alanine + UDP + H(+). It functions in the pathway cell wall biogenesis; peptidoglycan biosynthesis. Cell wall formation. Catalyzes the transfer of a GlcNAc subunit on undecaprenyl-pyrophosphoryl-MurNAc-pentapeptide (lipid intermediate I) to form undecaprenyl-pyrophosphoryl-MurNAc-(pentapeptide)GlcNAc (lipid intermediate II). This Burkholderia ambifaria (strain MC40-6) protein is UDP-N-acetylglucosamine--N-acetylmuramyl-(pentapeptide) pyrophosphoryl-undecaprenol N-acetylglucosamine transferase.